We begin with the raw amino-acid sequence, 246 residues long: Pyridoxine 5'-phosphate synthase (246 aa).

Asn8 and Arg19 together coordinate 3-amino-2-oxopropyl phosphate. The active-site Proton acceptor is His44. 1-deoxy-D-xylulose 5-phosphate contacts are provided by Arg46 and His51. Glu76 (proton acceptor) is an active-site residue. Thr106 is a binding site for 1-deoxy-D-xylulose 5-phosphate. The Proton donor role is filled by His198. 3-amino-2-oxopropyl phosphate is bound by residues Asp199 and 221–222 (GH).

Belongs to the PNP synthase family. As to quaternary structure, homooctamer; tetramer of dimers.

It is found in the cytoplasm. The catalysed reaction is 3-amino-2-oxopropyl phosphate + 1-deoxy-D-xylulose 5-phosphate = pyridoxine 5'-phosphate + phosphate + 2 H2O + H(+). It participates in cofactor biosynthesis; pyridoxine 5'-phosphate biosynthesis; pyridoxine 5'-phosphate from D-erythrose 4-phosphate: step 5/5. Catalyzes the complicated ring closure reaction between the two acyclic compounds 1-deoxy-D-xylulose-5-phosphate (DXP) and 3-amino-2-oxopropyl phosphate (1-amino-acetone-3-phosphate or AAP) to form pyridoxine 5'-phosphate (PNP) and inorganic phosphate. The chain is Pyridoxine 5'-phosphate synthase from Mesorhizobium japonicum (strain LMG 29417 / CECT 9101 / MAFF 303099) (Mesorhizobium loti (strain MAFF 303099)).